A 457-amino-acid polypeptide reads, in one-letter code: MISVPLLKGKRVLVMGLGKSGTATARALLAAGAGVMAWDDGEAARKSGAEAGIPIRDPSLLPLDKADLLVWSPGIPHTHPQPHPLAEKARAANLPMVCDVELLAQALPGARMLAVTGTNGKSTTTTLLAHVLDECGLPVAAGGNLGTAALDLPELPGDGRYVLELSSYQLELTHSLKLGVAILLNVTPDHLGRHGGMAGYIAAKRRVFDFLTPGGAAVVGIDDGPCRAIVAELDRRGIRVVKISVDSVLAEGVSAPEGVLLDNAKPVCDLKTIPSLPGRHNWQNACAVYAAARAEGLSPKQIAQALATYPGLAHRQELVGEDHGIAWINDSKATNADAVEKALVCYDHVYWILGGQAKEGGIASLEKHFGRIQHAFLIGEATEAFAATLDGKVRFTRCATLDKAVAAARNLAVSDSIPGAVVLLSPACASWDQFTSFEHRGDTFRELVQAFDQGGAA.

ATP is bound at residue 117–123 (GTNGKST).

This sequence belongs to the MurCDEF family.

The protein localises to the cytoplasm. The enzyme catalyses UDP-N-acetyl-alpha-D-muramoyl-L-alanine + D-glutamate + ATP = UDP-N-acetyl-alpha-D-muramoyl-L-alanyl-D-glutamate + ADP + phosphate + H(+). It participates in cell wall biogenesis; peptidoglycan biosynthesis. Its function is as follows. Cell wall formation. Catalyzes the addition of glutamate to the nucleotide precursor UDP-N-acetylmuramoyl-L-alanine (UMA). This chain is UDP-N-acetylmuramoylalanine--D-glutamate ligase, found in Paramagnetospirillum magneticum (strain ATCC 700264 / AMB-1) (Magnetospirillum magneticum).